The primary structure comprises 163 residues: Nucleotide-binding protein GK0742 (163 aa).

Belongs to the YajQ family.

Its function is as follows. Nucleotide-binding protein. This Geobacillus kaustophilus (strain HTA426) protein is Nucleotide-binding protein GK0742.